The chain runs to 675 residues: DNA ligase (675 aa).

Residues 33 to 37 (DAEYD), 82 to 83 (SL), and Glu-114 each bind NAD(+). The active-site N6-AMP-lysine intermediate is the Lys-116. 4 residues coordinate NAD(+): Arg-137, Glu-174, Lys-291, and Lys-315. The Zn(2+) site is built by Cys-409, Cys-412, Cys-427, and Cys-433. The BRCT domain occupies 595 to 675 (AGDNPFAGKT…EMIRLLDQSK (81 aa)).

It belongs to the NAD-dependent DNA ligase family. LigA subfamily. Mg(2+) serves as cofactor. The cofactor is Mn(2+).

It carries out the reaction NAD(+) + (deoxyribonucleotide)n-3'-hydroxyl + 5'-phospho-(deoxyribonucleotide)m = (deoxyribonucleotide)n+m + AMP + beta-nicotinamide D-nucleotide.. DNA ligase that catalyzes the formation of phosphodiester linkages between 5'-phosphoryl and 3'-hydroxyl groups in double-stranded DNA using NAD as a coenzyme and as the energy source for the reaction. It is essential for DNA replication and repair of damaged DNA. In Proteus mirabilis (strain HI4320), this protein is DNA ligase.